Here is a 300-residue protein sequence, read N- to C-terminus: Cytochrome f (300 aa).

An N-terminal signal peptide occupies residues 1 to 32 (MMTYLSKQFSKLLFGQLLFLFIGNLLLKPVQA). Heme-binding residues include Tyr-33, Cys-53, Cys-56, and His-57. Residues 267–287 (LKTFIAFCVTVFIGQLAFVLK) traverse the membrane as a helical segment.

The protein belongs to the cytochrome f family. In terms of assembly, the 4 large subunits of the cytochrome b6-f complex are cytochrome b6, subunit IV (17 kDa polypeptide, petD), cytochrome f and the Rieske protein, while the 4 small subunits are PetG, PetL, PetM and PetN. The complex functions as a dimer. Requires heme as cofactor.

The protein localises to the plastid. It is found in the chloroplast thylakoid membrane. Its function is as follows. Component of the cytochrome b6-f complex, which mediates electron transfer between photosystem II (PSII) and photosystem I (PSI), cyclic electron flow around PSI, and state transitions. This chain is Cytochrome f, found in Cyanidioschyzon merolae (strain NIES-3377 / 10D) (Unicellular red alga).